We begin with the raw amino-acid sequence, 244 residues long: tRNA (guanine-N(1)-)-methyltransferase (244 aa).

Residues Gly-113 and 133 to 138 (IGDYVL) contribute to the S-adenosyl-L-methionine site.

Belongs to the RNA methyltransferase TrmD family. In terms of assembly, homodimer.

It localises to the cytoplasm. It catalyses the reaction guanosine(37) in tRNA + S-adenosyl-L-methionine = N(1)-methylguanosine(37) in tRNA + S-adenosyl-L-homocysteine + H(+). Functionally, specifically methylates guanosine-37 in various tRNAs. In Bacillus cereus (strain B4264), this protein is tRNA (guanine-N(1)-)-methyltransferase.